Here is a 99-residue protein sequence, read N- to C-terminus: Nucleoid-associated protein Cj1642 (99 aa).

This sequence belongs to the YbaB/EbfC family. In terms of assembly, homodimer.

The protein resides in the cytoplasm. The protein localises to the nucleoid. Its function is as follows. Binds to DNA and alters its conformation. May be involved in regulation of gene expression, nucleoid organization and DNA protection. This chain is Nucleoid-associated protein Cj1642, found in Campylobacter jejuni subsp. jejuni serotype O:2 (strain ATCC 700819 / NCTC 11168).